Consider the following 582-residue polypeptide: MEDNKELQCLICKYSDTDDLVFGEWMIVRNLQVHYFCLLLSTHLPQRGGDSSGILGFLLRDIREEAAAAEKRKCWYCNKIGASLQCDRCRSLFHLKCGLENRAVFEFCGQYKSYCYKCRPMDDYKRQLQSNPPRNATCPICFSSIYKVELHCVVYGDCCRLGFAHKKCMRQYALTSGYYLRCIWCRSERFRDSIRLQSVFVPDRDATWEKQRNAYRELHERNLKCDQPNCLCPSGRTYNRLSWVILCCSSCAATSAHLKCLVGALRLPKKRERTDFKCSMCLDVERRIAEGPARTTEETNADGDNQVDGSFYVQKLGPDAATRSLTQTPVFSEEDESERSSNITVIFSQPKSNATSERLSLSPPQEEMIVEIPDSPEASPKTSIDENHSPQPIARRDTSDSPQPIAASEIPDSPQPTAASEIPDLPQTTAINVNPELTQQTALNTIPHSPQPEASFSTQLVSQTFDCPQPQEQAVAKAPNSPSLPKEDPNTLLVLKSGFQCPGEPFFYLVIYEFEHGTCMGECIGTCVLRFKEDDPRIQDTSQAALERVNITPDDVWCRSEDRGIFEHIEKFHEWYRSEGFS.

The C2HC pre-PHD-type zinc-finger motif lies at 6–44; sequence ELQCLICKYSDTDDLVFGEWMIVRNLQVHYFCLLLSTHL. An extended PHD domain (ePHD) region spans residues 6-119; sequence ELQCLICKYS…QYKSYCYKCR (114 aa). The PHD-type; atypical zinc finger occupies 72–119; it reads RKCWYCNKIGASLQCDRCRSLFHLKCGLENRAVFEFCGQYKSYCYKCR. Disordered stretches follow at residues 292-311 and 323-422; these read PART…DGSF and RSLT…ASEI. Residues 340-363 are compositionally biased toward polar residues; that stretch reads SSNITVIFSQPKSNATSERLSLSP. Over residues 383-399 the composition is skewed to basic and acidic residues; sequence SIDENHSPQPIARRDTS.

Its function is as follows. Required for survival of imaginal disk cells possibly by regulation of cell apoptosis. Required for germline stem cell self-renewal through mediation of BMP signaling. This chain is Pineapple eye protein, found in Drosophila melanogaster (Fruit fly).